The primary structure comprises 100 residues: Urease subunit gamma (100 aa).

It belongs to the urease gamma subunit family. Heterotrimer of UreA (gamma), UreB (beta) and UreC (alpha) subunits. Three heterotrimers associate to form the active enzyme.

Its subcellular location is the cytoplasm. It catalyses the reaction urea + 2 H2O + H(+) = hydrogencarbonate + 2 NH4(+). Its pathway is nitrogen metabolism; urea degradation; CO(2) and NH(3) from urea (urease route): step 1/1. The chain is Urease subunit gamma from Prochlorococcus marinus subsp. pastoris (strain CCMP1986 / NIES-2087 / MED4).